Reading from the N-terminus, the 559-residue chain is Branched-chain-amino-acid aminotransferase-like protein 2 (559 aa).

This sequence belongs to the class-IV pyridoxal-phosphate-dependent aminotransferase family.

The protein is Branched-chain-amino-acid aminotransferase-like protein 2 of Arabidopsis thaliana (Mouse-ear cress).